We begin with the raw amino-acid sequence, 441 residues long: Serine/threonine-protein phosphatase 2A activator 1 (441 aa).

Composition is skewed to polar residues over residues 66 to 75 (NIPPSNTTHS) and 421 to 432 (QRQDDLNSTTYR). Disordered regions lie at residues 66 to 100 (NIPP…SSNQ) and 421 to 441 (QRQD…LGRN).

The protein belongs to the PTPA-type PPIase family.

It is found in the cytoplasm. The protein localises to the nucleus. It carries out the reaction [protein]-peptidylproline (omega=180) = [protein]-peptidylproline (omega=0). PPIases accelerate the folding of proteins. It catalyzes the cis-trans isomerization of proline imidic peptide bonds in oligopeptides. Acts as a regulatory subunit for PP2A-like phosphatases modulating their activity or substrate specificity, probably by inducing a conformational change in the catalytic subunit, a direct target of the PPIase. Can reactivate inactive phosphatase PP2A-phosphatase methylesterase complexes (PP2Ai) in presence of ATP and Mg(2+) by dissociating the inactive form from the complex. This is Serine/threonine-protein phosphatase 2A activator 1 (RRD1) from Debaryomyces hansenii (strain ATCC 36239 / CBS 767 / BCRC 21394 / JCM 1990 / NBRC 0083 / IGC 2968) (Yeast).